Consider the following 415-residue polypeptide: Putative serpin-Z6C (415 aa).

The RCL stretch occupies residues 357–381 (GTEAAAATAVCLTFASAAPSSRRPA).

The protein belongs to the serpin family.

Probable serine protease inhibitor. This chain is Putative serpin-Z6C, found in Oryza sativa subsp. japonica (Rice).